Reading from the N-terminus, the 305-residue chain is UDP-3-O-acyl-N-acetylglucosamine deacetylase (305 aa).

Residues His79, His238, and Asp242 each contribute to the Zn(2+) site. The active-site Proton donor is His265.

It belongs to the LpxC family. It depends on Zn(2+) as a cofactor.

It catalyses the reaction a UDP-3-O-[(3R)-3-hydroxyacyl]-N-acetyl-alpha-D-glucosamine + H2O = a UDP-3-O-[(3R)-3-hydroxyacyl]-alpha-D-glucosamine + acetate. It participates in glycolipid biosynthesis; lipid IV(A) biosynthesis; lipid IV(A) from (3R)-3-hydroxytetradecanoyl-[acyl-carrier-protein] and UDP-N-acetyl-alpha-D-glucosamine: step 2/6. Its function is as follows. Catalyzes the hydrolysis of UDP-3-O-myristoyl-N-acetylglucosamine to form UDP-3-O-myristoylglucosamine and acetate, the committed step in lipid A biosynthesis. This chain is UDP-3-O-acyl-N-acetylglucosamine deacetylase, found in Erwinia tasmaniensis (strain DSM 17950 / CFBP 7177 / CIP 109463 / NCPPB 4357 / Et1/99).